We begin with the raw amino-acid sequence, 97 residues long: Putative pterin-4-alpha-carbinolamine dehydratase (97 aa).

This sequence belongs to the pterin-4-alpha-carbinolamine dehydratase family.

It carries out the reaction (4aS,6R)-4a-hydroxy-L-erythro-5,6,7,8-tetrahydrobiopterin = (6R)-L-erythro-6,7-dihydrobiopterin + H2O. The protein is Putative pterin-4-alpha-carbinolamine dehydratase of Brucella abortus (strain S19).